Reading from the N-terminus, the 250-residue chain is Probable transcriptional regulatory protein tll0175 (250 aa).

It belongs to the TACO1 family.

The protein localises to the cytoplasm. The sequence is that of Probable transcriptional regulatory protein tll0175 from Thermosynechococcus vestitus (strain NIES-2133 / IAM M-273 / BP-1).